We begin with the raw amino-acid sequence, 788 residues long: MLTDRLRLKKARKLLNKINKLGPKMQAMSDEKLQGQTAIFKKQLKEGKSLDDILPEAYATVREADKRILGMFPYDVQVLGAIVLHNGSIAEMKTGEGKTLVATMALYLNALEGKGAMLVTPNGYLASRDKKELAPVYEWLGLSVSLAFAEEKDSKKKITAKTKRKWYNSDIVYTTASSLAFDYLFNNLASSKENQYLRPFNYVIVDEVDEVLLDEAQTPFVVSSSPNVQSNLYHLADQFVRLLDPEVDYVFKKDDQLFWLTAHGIEKAEQFFKLDSLFSNESRSVYRHIILAMGAHLTMRRGHDYLVVKGEVVLLDEDSGRLKRGVQVSTGIHQAVEAKEKVELTKIQKTAASITFPALFALFNKVSGMSGTAKVNEEEFLQTYNLKVVTIPTRVPVIRKDYRPLIFLTTIDKLMTAVDDVVEMHKTGRPVLLVAGSVENSEIISELLLNIGIPHNVLNAYNAAYEAQIIKNAGQKNAVTIATNMAGRGTDIKLGPGVKELGGLAVIGTEMLPKRVELQLAGRAGRQGDPGSSQFLISLEDSFISSNNTPRQKKYYRKLMKKKSKGKDITLLSGPRIRFSLLMLRTRKEDLNELMRSQTNKMEIILSLQRKNFYTRRDKIMKTDDLQEDVDRIIDNALNLYLEKQDLSNKSDLKYFINQHVTYQQVNVPDNLKTKKAIKDFLKELAYKILDEKKHVLINKKQANDFYQQVIISSMDGNWIDQVDRIEKIKINAQQWGRSGRPQDLLHQEKAFEAYKDFLDKITLSTFDNLLLSKIFTNEKGQLVVVFN.

ATP contacts are provided by residues Gln77, Gly95 to Thr99, and Asp491.

It belongs to the SecA family. In terms of assembly, monomer and homodimer. Part of the essential Sec protein translocation apparatus which comprises SecA, SecYEG and auxiliary proteins SecDF. Other proteins may also be involved.

The protein resides in the cell membrane. It is found in the cytoplasm. The catalysed reaction is ATP + H2O + cellular proteinSide 1 = ADP + phosphate + cellular proteinSide 2.. Part of the Sec protein translocase complex. Interacts with the SecYEG preprotein conducting channel. Has a central role in coupling the hydrolysis of ATP to the transfer of proteins into and across the cell membrane, serving as an ATP-driven molecular motor driving the stepwise translocation of polypeptide chains across the membrane. The chain is Protein translocase subunit SecA 2 from Lactobacillus johnsonii (strain CNCM I-12250 / La1 / NCC 533).